Here is a 225-residue protein sequence, read N- to C-terminus: Cobalt transport protein CbiM (225 aa).

6 helical membrane-spanning segments follow: residues 7-27, 43-63, 76-96, 108-128, 143-163, and 175-195; these read VLPLGWCAFWNALALPFVAIA, PFVGLIAAAVFAISCMPVPVP, LAAVLIGPWMTVLVTVVALLI, TLGADVASMGIAGAFTGYFAF, FLAGVTSDWATYATTALALAL, and FTGVALAFVPTQLPLGLLEGV.

Belongs to the CbiM family. In terms of assembly, forms an energy-coupling factor (ECF) transporter complex composed of an ATP-binding protein (A component, CbiO), a transmembrane protein (T component, CbiQ) and 2 possible substrate-capture proteins (S components, CbiM and CbiN) of unknown stoichimetry.

It localises to the cell inner membrane. It participates in cofactor biosynthesis; adenosylcobalamin biosynthesis. Part of the energy-coupling factor (ECF) transporter complex CbiMNOQ involved in cobalt import. This Sorangium cellulosum (strain So ce56) (Polyangium cellulosum (strain So ce56)) protein is Cobalt transport protein CbiM.